A 224-amino-acid polypeptide reads, in one-letter code: 7-cyano-7-deazaguanine synthase (224 aa).

8–18 (LSGGMDSAAVI) lines the ATP pocket. The Zn(2+) site is built by Cys186, Cys196, Cys199, and Cys202.

Belongs to the QueC family. The cofactor is Zn(2+).

The catalysed reaction is 7-carboxy-7-deazaguanine + NH4(+) + ATP = 7-cyano-7-deazaguanine + ADP + phosphate + H2O + H(+). The protein operates within purine metabolism; 7-cyano-7-deazaguanine biosynthesis. Catalyzes the ATP-dependent conversion of 7-carboxy-7-deazaguanine (CDG) to 7-cyano-7-deazaguanine (preQ(0)). The protein is 7-cyano-7-deazaguanine synthase of Xanthomonas axonopodis pv. citri (strain 306).